The following is a 355-amino-acid chain: Peptide chain release factor 1 (355 aa).

At Q233 the chain carries N5-methylglutamine.

It belongs to the prokaryotic/mitochondrial release factor family. In terms of processing, methylated by PrmC. Methylation increases the termination efficiency of RF1.

The protein resides in the cytoplasm. Peptide chain release factor 1 directs the termination of translation in response to the peptide chain termination codons UAG and UAA. The sequence is that of Peptide chain release factor 1 from Amoebophilus asiaticus (strain 5a2).